Consider the following 111-residue polypeptide: MKHYEVVLMIHPDQSDQLDAMLGKYRGIIEEKGGKIHRFEDWGRRQLAYPIEKLHKAHYVLFNIECPTESLEKLQESLRYNDAILRRLVIATKEAITEPSVMMESNEKEVI.

It belongs to the bacterial ribosomal protein bS6 family.

Functionally, binds together with bS18 to 16S ribosomal RNA. This chain is Small ribosomal subunit protein bS6, found in Francisella tularensis subsp. tularensis (strain FSC 198).